The chain runs to 289 residues: Zinc finger matrin-type protein 3 (289 aa).

The segment at Met1–Glu42 is disordered. Residues Leu9 to Pro20 show a composition bias toward pro residues. The segment covering Ala24–Leu33 has biased composition (polar residues). Matrin-type zinc fingers lie at residues Leu70–Asn100 and Asp147–Leu177. Polar residues predominate over residues Ala180–Leu191. Residues Ala180–Asn201 are disordered. Residues Phe246–Glu276 form a Matrin-type 3 zinc finger.

Interacts with dsRNA. As to expression, highly expressed in adult brain, and moderately in adult kidney and testis. Not detected in fetal brain, heart, pancreas, adrenal gland, liver or small intestine.

The protein localises to the nucleus. The protein resides in the nucleolus. Functionally, acts as a bona fide target gene of p53/TP53. May play a role in the TP53-dependent growth regulatory pathway. May contribute to TP53-mediated apoptosis by regulation of TP53 expression and translocation to the nucleus and nucleolus. This Homo sapiens (Human) protein is Zinc finger matrin-type protein 3.